The chain runs to 84 residues: Putative membrane protein insertion efficiency factor (84 aa).

The tract at residues 63–84 is disordered; that stretch reads GEDPVPNHFTLRRNKKEKPSKS.

It belongs to the UPF0161 family.

The protein localises to the cell membrane. Its function is as follows. Could be involved in insertion of integral membrane proteins into the membrane. In Streptococcus mutans serotype c (strain ATCC 700610 / UA159), this protein is Putative membrane protein insertion efficiency factor.